A 98-amino-acid polypeptide reads, in one-letter code: Protein E7 (98 aa).

Residues 1-40 form an E7 terminal domain region; the sequence is MHGDTPTLHEYMLDLQPETTDLYCYEQLNDSSEEEDEIDG. Residues 22-26 carry the LXCXE motif; interaction with host RB1 and TMEM173/STING motif; that stretch reads LYCYE. A zinc finger lies at 58-94; sequence CCKCDSTLRLCVQSTHVDIRTLEDLLMGTLGIVCPIC. Residues 76–84 carry the Nuclear export signal motif; it reads IRTLEDLLM.

It belongs to the papillomaviridae E7 protein family. In terms of assembly, homodimer. Homooligomer. Interacts with host RB1; this interaction induces dissociation of RB1-E2F1 complex thereby disrupting RB1 activity. Interacts with host EP300; this interaction represses EP300 transcriptional activity. Forms a complex with CHD4 and HDAC1, thereby altering the action of host histone deacetylation. A similar complex involving E7, CHD4 and HDAC2 may also form. Interacts with protein E2; this interaction inhibits E7 oncogenic activity. In terms of processing, highly phosphorylated.

Its subcellular location is the host cytoplasm. It is found in the host nucleus. Functionally, plays a role in viral genome replication by driving entry of quiescent cells into the cell cycle. Stimulation of progression from G1 to S phase allows the virus to efficiently use the cellular DNA replicating machinery to achieve viral genome replication. E7 protein has both transforming and trans-activating activities. Induces the disassembly of the E2F1 transcription factor from RB1, with subsequent transcriptional activation of E2F1-regulated S-phase genes. Interferes with host histone deacetylation mediated by HDAC1 and HDAC2, leading to transcription activation. Also plays a role in the inhibition of both antiviral and antiproliferative functions of host interferon alpha. Interaction with host TMEM173/STING impairs the ability of TMEM173/STING to sense cytosolic DNA and promote the production of type I interferon (IFN-alpha and IFN-beta). The chain is Protein E7 from Human papillomavirus type 16.